The sequence spans 176 residues: ATP-dependent protease subunit HslV (176 aa).

Residue threonine 5 is part of the active site. 3 residues coordinate Na(+): alanine 161, cysteine 164, and threonine 167.

Belongs to the peptidase T1B family. HslV subfamily. A double ring-shaped homohexamer of HslV is capped on each side by a ring-shaped HslU homohexamer. The assembly of the HslU/HslV complex is dependent on binding of ATP.

The protein resides in the cytoplasm. The catalysed reaction is ATP-dependent cleavage of peptide bonds with broad specificity.. With respect to regulation, allosterically activated by HslU binding. Functionally, protease subunit of a proteasome-like degradation complex believed to be a general protein degrading machinery. The sequence is that of ATP-dependent protease subunit HslV from Caldicellulosiruptor saccharolyticus (strain ATCC 43494 / DSM 8903 / Tp8T 6331).